Here is an 841-residue protein sequence, read N- to C-terminus: Toll-like receptor 4 (841 aa).

The signal sequence occupies residues 1-23 (MMARARLAAALIPATAILSCLRT). Over 24–632 (ESWDPCVQVV…FRNATCQLSK (609 aa)) the chain is Extracellular. Cys29 and Cys40 are joined by a disulfide. N-linked (GlcNAc...) asparagine glycosylation is found at Asn35 and Asn73. LRR repeat units lie at residues 55-76 (STKM…NFSS), 79-100 (ELQV…TFQG), 103-124 (HLST…AFSG), 127-148 (SLQK…PIGH), 151-172 (NLKE…EYFS), 176-197 (NLEH…DVKV), and 205-225 (NLSL…TFKE). 4 N-linked (GlcNAc...) asparagine glycosylation sites follow: Asn205, Asn238, Asn282, and Asn309. Cysteines 281 and 306 form a disulfide. LRR repeat units follow at residues 352–373 (SLKK…FQLP), 374–394 (SLQY…CSHT), 400–422 (NLKH…MGLE), 423–444 (QLEH…SAFL), 448–469 (NLRY…IFTG), 472–495 (SLQT…FTEL), 497–518 (NLTV…AFHS), 521–542 (SLQV…LYEP), and 545–568 (SLRI…QNLP). A disulfide bridge connects residues Cys390 and Cys391. 2 N-linked (GlcNAc...) asparagine glycosylation sites follow: Asn497 and Asn526. Asn575 carries N-linked (GlcNAc...) asparagine glycosylation. An LRRCT domain is found at 579-630 (NAFACVCEHQSFLQWVKDQRQLLVGAEQMMCAEPLDMEDMPVLSFRNATCQL). 2 disulfides stabilise this stretch: Cys583-Cys609 and Cys585-Cys628. An N-linked (GlcNAc...) asparagine glycan is attached at Asn625. A helical transmembrane segment spans residues 633–653 (TIISVSVVTVLLVSVVGVLVY). Residues 654 to 841 (KFYFHLMLLA…TNPQEATTST (188 aa)) lie on the Cytoplasmic side of the membrane. Residues 673–816 (SIYDAFVIYS…VFWRRLRKAL (144 aa)) enclose the TIR domain. Positions 820-841 (KPQSPEGTADAETNPQEATTST) are disordered. The segment covering 830–841 (AETNPQEATTST) has biased composition (polar residues).

This sequence belongs to the Toll-like receptor family. As to quaternary structure, belongs to the lipopolysaccharide (LPS) receptor, a multi-protein complex containing at least CD14, LY96 and TLR4. Binding to bacterial LPS leads to homodimerization. Interacts with LY96 via the extracellular domain. Interacts with MYD88 and TIRAP via their respective TIR domains. Interacts with TICAM2. Interacts with NOX4. Interacts with CNPY3 and HSP90B1; this interaction is required for proper folding in the endoplasmic reticulum. Interacts with MAP3K21; this interaction leads to negative regulation of TLR4 signaling. Interacts with CD36, following CD36 stimulation by oxLDL or amyloid-beta 42, and forms a heterodimer with TLR6. The trimeric complex is internalized and triggers inflammatory response. LYN kinase activity facilitates TLR4-TLR6 heterodimerization and signal initiation. Interacts with TICAM1 in response to LPS in a WDFY1-dependent manner. Interacts with WDFY1 in response to LPS. Interacts with SMPDL3B. Interacts with CEACAM1; upon lipopolysaccharide stimulation, forms a complex including TLR4 and the phosphorylated form of SYK and CEACAM1, which in turn, recruits PTPN6 that dephosphorylates SYK, reducing the production of reactive oxygen species (ROS) and lysosome disruption, which in turn, reduces the activity of the inflammasome. Interacts with RFTN1; the interaction occurs in response to lipopolysaccharide stimulation. Interacts with SCIMP; the interaction occurs in response to lipopolysaccharide stimulation and is enhanced by phosphorylation of SCIMP by LYN. This interaction facilitates the phosphorylation of TLR4 by LYN which elicits a selective cytokine response in macrophages. Interacts with TRAF3IP3. Interacts with TREM1; this interaction enhances TLR4-mediated inflammatory response. Interacts with ZG16B/PAUF. Interacts with CD82; this interaction inhibits TLR4-mediated signaling pathway. Phosphorylated on tyrosine residues by LYN after binding lipopolysaccharide. Post-translationally, ubiquitinated by RNF128 via 'Lys-28'-linked polyubiquitin chains, leading to proteasomal degradation.

Its subcellular location is the cell membrane. The protein resides in the early endosome. The protein localises to the cell projection. It localises to the ruffle. Transmembrane receptor that functions as a pattern recognition receptor recognizing pathogen- and damage-associated molecular patterns (PAMPs and DAMPs) to induce innate immune responses via downstream signaling pathways. At the plasma membrane, cooperates with LY96 to mediate the innate immune response to bacterial lipopolysaccharide (LPS). Also involved in LPS-independent inflammatory responses triggered by free fatty acids, such as palmitate, and Ni(2+). Mechanistically, acts via MYD88, TIRAP and TRAF6, leading to NF-kappa-B activation, cytokine secretion and the inflammatory response. Alternatively, CD14-mediated TLR4 internalization via endocytosis is associated with the initiation of a MYD88-independent signaling via the TICAM1-TBK1-IRF3 axis leading to type I interferon production. In addition to the secretion of proinflammatory cytokines, initiates the activation of NLRP3 inflammasome and formation of a positive feedback loop between autophagy and NF-kappa-B signaling cascade. In complex with TLR6, promotes inflammation in monocytes/macrophages by associating with TLR6 and the receptor CD86. Upon ligand binding, such as oxLDL or amyloid-beta 42, the TLR4:TLR6 complex is internalized and triggers inflammatory response, leading to NF-kappa-B-dependent production of CXCL1, CXCL2 and CCL9 cytokines, via MYD88 signaling pathway, and CCL5 cytokine, via TICAM1 signaling pathway. In myeloid dendritic cells, vesicular stomatitis virus glycoprotein G but not LPS promotes the activation of IRF7, leading to type I IFN production in a CD14-dependent manner. The sequence is that of Toll-like receptor 4 (TLR4) from Bos taurus (Bovine).